Reading from the N-terminus, the 117-residue chain is Large ribosomal subunit protein uL18 (117 aa).

The protein belongs to the universal ribosomal protein uL18 family. In terms of assembly, part of the 50S ribosomal subunit; part of the 5S rRNA/L5/L18/L25 subcomplex. Contacts the 5S and 23S rRNAs.

This is one of the proteins that bind and probably mediate the attachment of the 5S RNA into the large ribosomal subunit, where it forms part of the central protuberance. The chain is Large ribosomal subunit protein uL18 from Pectobacterium atrosepticum (strain SCRI 1043 / ATCC BAA-672) (Erwinia carotovora subsp. atroseptica).